The sequence spans 248 residues: Pulmonary surfactant-associated protein A (248 aa).

The signal sequence occupies residues 1–17 (MLLCSLTLMLLWMVASG). The Collagen-like domain maps to 28–100 (GSPGIPGTPG…PGERGPPGFP (73 aa)). The interval 29-103 (SPGIPGTPGS…RGPPGFPAYL (75 aa)) is disordered. A compositionally biased stretch (basic and acidic residues) spans 42-51 (PGRDGRDGIK). The span at 54–65 (PGPPGPMGPPGG) shows a compositional bias: pro residues. Residues 69–82 (LPGRDGMTGAPGLP) are compositionally biased toward low complexity. Positions 84–93 (ERGEKGEPGE) are enriched in basic and acidic residues. The C-type lectin domain occupies 127–247 (LQGSMLEVGE…CLQYRLAICE (121 aa)). 2 disulfides stabilise this stretch: cysteine 155–cysteine 246 and cysteine 224–cysteine 238. Asparagine 207 carries N-linked (GlcNAc...) asparagine glycosylation. Ca(2+)-binding residues include glutamate 215, arginine 217, asparagine 234, and aspartate 235.

This sequence belongs to the SFTPA family. Oligomeric complex of 6 set of homotrimers.

It is found in the secreted. It localises to the extracellular space. Its subcellular location is the extracellular matrix. The protein localises to the surface film. In presence of calcium ions, it binds to surfactant phospholipids and contributes to lower the surface tension at the air-liquid interface in the alveoli of the mammalian lung and is essential for normal respiration. Enhances the expression of MYO18A/SP-R210 on alveolar macrophages. This is Pulmonary surfactant-associated protein A (SFTPA1) from Ovis aries (Sheep).